The chain runs to 137 residues: Small ribosomal subunit protein uS12 (137 aa).

Disordered regions lie at residues 1 to 21 (MPTINQLVRKPRKSKIEKSDS) and 33 to 57 (KVQTKMAAPQKRGVATRVGTMTPKK).

This sequence belongs to the universal ribosomal protein uS12 family. In terms of assembly, part of the 30S ribosomal subunit. Contacts proteins S8 and S17. May interact with IF1 in the 30S initiation complex.

Functionally, with S4 and S5 plays an important role in translational accuracy. In terms of biological role, interacts with and stabilizes bases of the 16S rRNA that are involved in tRNA selection in the A site and with the mRNA backbone. Located at the interface of the 30S and 50S subunits, it traverses the body of the 30S subunit contacting proteins on the other side and probably holding the rRNA structure together. The combined cluster of proteins S8, S12 and S17 appears to hold together the shoulder and platform of the 30S subunit. This Streptococcus pyogenes serotype M1 protein is Small ribosomal subunit protein uS12.